Here is a 785-residue protein sequence, read N- to C-terminus: Leucyl aminopeptidase (785 aa).

Substrate contacts are provided by residues glutamate 106 and 238–242 (GAMEN). Histidine 273 is a binding site for Zn(2+). Residue glutamate 274 is the Proton acceptor of the active site. Residues histidine 277 and glutamate 296 each coordinate Zn(2+).

The protein belongs to the peptidase M1 family. As to quaternary structure, co-immunoprecipitates with the 60 kDa chaperonin. Zn(2+) is required as a cofactor. Post-translationally, can be phosphorylated by cell extracts.

It is found in the cytoplasm. It carries out the reaction Release of an N-terminal amino acid, Xaa-|-Yaa-, in which Xaa is preferably Leu, but may be other amino acids including Pro although not Arg or Lys, and Yaa may be Pro. Amino acid amides and methyl esters are also readily hydrolyzed, but rates on arylamides are exceedingly low.. In terms of biological role, preferentially acts as a leucyl-aminopeptidase, although it also has activity against other substrates. The protein is Leucyl aminopeptidase (ape2) of Saccharolobus solfataricus (strain ATCC 35092 / DSM 1617 / JCM 11322 / P2) (Sulfolobus solfataricus).